Consider the following 106-residue polypeptide: Nucleoid-associated protein XOO1065 (106 aa).

The span at 80 to 89 shows a compositional bias: basic and acidic residues; sequence KIDAESKDRM. The disordered stretch occupies residues 80–106; it reads KIDAESKDRMGSATAGMQLPPGMKLPF.

The protein belongs to the YbaB/EbfC family. As to quaternary structure, homodimer.

It localises to the cytoplasm. The protein resides in the nucleoid. Its function is as follows. Binds to DNA and alters its conformation. May be involved in regulation of gene expression, nucleoid organization and DNA protection. This Xanthomonas oryzae pv. oryzae (strain KACC10331 / KXO85) protein is Nucleoid-associated protein XOO1065.